Reading from the N-terminus, the 254-residue chain is Thiazole synthase (254 aa).

Lysine 95 functions as the Schiff-base intermediate with DXP in the catalytic mechanism. 1-deoxy-D-xylulose 5-phosphate is bound by residues glycine 156, 182–183, and 204–205; these read AG and NT.

The protein belongs to the ThiG family. Homotetramer. Forms heterodimers with either ThiH or ThiS.

It localises to the cytoplasm. The catalysed reaction is [ThiS sulfur-carrier protein]-C-terminal-Gly-aminoethanethioate + 2-iminoacetate + 1-deoxy-D-xylulose 5-phosphate = [ThiS sulfur-carrier protein]-C-terminal Gly-Gly + 2-[(2R,5Z)-2-carboxy-4-methylthiazol-5(2H)-ylidene]ethyl phosphate + 2 H2O + H(+). It functions in the pathway cofactor biosynthesis; thiamine diphosphate biosynthesis. Catalyzes the rearrangement of 1-deoxy-D-xylulose 5-phosphate (DXP) to produce the thiazole phosphate moiety of thiamine. Sulfur is provided by the thiocarboxylate moiety of the carrier protein ThiS. In vitro, sulfur can be provided by H(2)S. The protein is Thiazole synthase of Shewanella sp. (strain MR-7).